The primary structure comprises 362 residues: Cell death regulator Aven (362 aa).

Disordered stretches follow at residues 1–111 (MQAE…NYSK), 214–237 (VKPK…GPGG), and 253–362 (VLLG…SMIS). The span at 8 to 17 (RGGRGRRPGR) shows a compositional bias: basic residues. The segment covering 37 to 47 (RGGGGGGGGDG) has biased composition (gly residues). The segment covering 50-60 (RRGRGRGRGFR) has biased composition (basic residues). The segment covering 61–72 (GARGGRGGGGAP) has biased composition (gly residues). Residues 90-105 (VEDDSDAETYGEENDE) are compositionally biased toward acidic residues. Residue Ser-94 is modified to Phosphoserine. Position 230 is an N6-methyllysine (Lys-230). The segment covering 350–362 (EEELEDWLDSMIS) has biased composition (acidic residues).

Binds Apaf-1, BCL-2 and BAD (Bcl-xl). Highly expressed in testis, ovary, thymus, prostate, spleen, small intestine, colon, heart, skeletal muscle, liver, kidney and pancreas.

It localises to the endomembrane system. Protects against apoptosis mediated by Apaf-1. This chain is Cell death regulator Aven (AVEN), found in Homo sapiens (Human).